A 227-amino-acid polypeptide reads, in one-letter code: Large ribosomal subunit protein uL3 (227 aa).

Belongs to the universal ribosomal protein uL3 family. As to quaternary structure, part of the 50S ribosomal subunit. Forms a cluster with proteins L14 and L19.

Its function is as follows. One of the primary rRNA binding proteins, it binds directly near the 3'-end of the 23S rRNA, where it nucleates assembly of the 50S subunit. The chain is Large ribosomal subunit protein uL3 from Leuconostoc citreum (strain KM20).